The primary structure comprises 498 residues: Glutathione hydrolase 6 (498 aa).

The Cytoplasmic portion of the chain corresponds to 1-49 (MDATTGAVLYQKLQLWEPGMESEEEEEEEEIAEPLVLSLRRLQNTPGNK). A helical; Signal-anchor for type II membrane protein transmembrane segment spans residues 50 to 70 (VGGLPGAWTRLLAGLLLLAVS). Residues 71 to 498 (SSLALRQLQG…PSGCCPFQGY (428 aa)) are Extracellular-facing. N-linked (GlcNAc...) asparagine glycosylation is found at Asn162, Asn167, and Asn376.

It belongs to the gamma-glutamyltransferase family. As to quaternary structure, heterodimer composed of the light and heavy chains. The active site is located in the light chain. Cleaved by autocatalysis into a large and a small subunit and the autocatalytic cleavage is essential to the functional activation of the enzyme.

The protein localises to the membrane. The catalysed reaction is an N-terminal (5-L-glutamyl)-[peptide] + an alpha-amino acid = 5-L-glutamyl amino acid + an N-terminal L-alpha-aminoacyl-[peptide]. It carries out the reaction glutathione + H2O = L-cysteinylglycine + L-glutamate. It catalyses the reaction an S-substituted glutathione + H2O = an S-substituted L-cysteinylglycine + L-glutamate. The protein operates within sulfur metabolism; glutathione metabolism. Functionally, hydrolyzes and transfers gamma-glutamyl moieties from glutathione and other gamma-glutamyl compounds to acceptors. The chain is Glutathione hydrolase 6 from Rattus norvegicus (Rat).